Reading from the N-terminus, the 63-residue chain is Beta-defensin 5 (63 aa).

A signal peptide spans Met1 to Thr22. Pyrrolidone carboxylic acid is present on Gln23. 3 disulfide bridges follow: Cys31–Cys59, Cys38–Cys52, and Cys42–Cys60.

This sequence belongs to the beta-defensin family.

It localises to the secreted. Has antibacterial activity. The chain is Beta-defensin 5 (Defb5) from Rattus norvegicus (Rat).